A 138-amino-acid chain; its full sequence is Large ribosomal subunit protein bL17 (138 aa).

Belongs to the bacterial ribosomal protein bL17 family. Part of the 50S ribosomal subunit. Contacts protein L32.

The protein is Large ribosomal subunit protein bL17 of Nitrobacter hamburgensis (strain DSM 10229 / NCIMB 13809 / X14).